The following is a 127-amino-acid chain: Aspartate 1-decarboxylase (127 aa).

The active-site Schiff-base intermediate with substrate; via pyruvic acid is Ser-25. Ser-25 is subject to Pyruvic acid (Ser). Thr-57 provides a ligand contact to substrate. Tyr-58 serves as the catalytic Proton donor. 73–75 serves as a coordination point for substrate; sequence GAA.

This sequence belongs to the PanD family. Heterooctamer of four alpha and four beta subunits. It depends on pyruvate as a cofactor. In terms of processing, is synthesized initially as an inactive proenzyme, which is activated by self-cleavage at a specific serine bond to produce a beta-subunit with a hydroxyl group at its C-terminus and an alpha-subunit with a pyruvoyl group at its N-terminus.

Its subcellular location is the cytoplasm. It catalyses the reaction L-aspartate + H(+) = beta-alanine + CO2. Its pathway is cofactor biosynthesis; (R)-pantothenate biosynthesis; beta-alanine from L-aspartate: step 1/1. In terms of biological role, catalyzes the pyruvoyl-dependent decarboxylation of aspartate to produce beta-alanine. The chain is Aspartate 1-decarboxylase from Clostridium botulinum (strain 657 / Type Ba4).